The primary structure comprises 450 residues: Isoleucine 2-epimerase (450 aa).

Residues 115–116, Y142, and 250–253 contribute to the pyridoxal 5'-phosphate site; these read GS and DEVN. An N6-(pyridoxal phosphate)lysine modification is found at K280. T309 contacts pyridoxal 5'-phosphate.

This sequence belongs to the class-III pyridoxal-phosphate-dependent aminotransferase family. As to quaternary structure, homotetramer. Pyridoxal 5'-phosphate serves as cofactor.

It catalyses the reaction L-isoleucine = D-allo-isoleucine. In terms of biological role, catalyzes the epimerization of L-isoleucine to D-allo-isoleucine and D-allo-isoleucine to L-isoleucine. Can also catalyze the racemization of many nonpolar amino acids, including leucine and valine. Does not have GABA aminotransferase activity. The sequence is that of Isoleucine 2-epimerase from Lentilactobacillus buchneri (Lactobacillus buchneri).